Reading from the N-terminus, the 266-residue chain is Dihydropteroate synthase (266 aa).

One can recognise a Pterin-binding domain in the interval 12 to 260; that stretch reads AAIMGILNVT…DVKANQEIVA (249 aa). Residue N19 coordinates Mg(2+). Residues T59, D93, N112, D176, K212, and 248–250 each bind (7,8-dihydropterin-6-yl)methyl diphosphate; that span reads RVH.

The protein belongs to the DHPS family. Homodimer or homotrimer. It depends on Mg(2+) as a cofactor.

The catalysed reaction is (7,8-dihydropterin-6-yl)methyl diphosphate + 4-aminobenzoate = 7,8-dihydropteroate + diphosphate. It functions in the pathway cofactor biosynthesis; tetrahydrofolate biosynthesis; 7,8-dihydrofolate from 2-amino-4-hydroxy-6-hydroxymethyl-7,8-dihydropteridine diphosphate and 4-aminobenzoate: step 1/2. In terms of biological role, catalyzes the condensation of para-aminobenzoate (pABA) with 6-hydroxymethyl-7,8-dihydropterin diphosphate (DHPt-PP) to form 7,8-dihydropteroate (H2Pte), the immediate precursor of folate derivatives. The protein is Dihydropteroate synthase (folP) of Streptococcus pyogenes.